A 246-amino-acid chain; its full sequence is Chlorophyll a-b binding protein 6A, chloroplastic (246 aa).

The transit peptide at 1–45 directs the protein to the chloroplast; the sequence is MASNTLMSCGIPAVCPSFLSSTKSKFAAAMPVYVGATNFMSRFSM. Trp-49 provides a ligand contact to chlorophyll b. Phe-69, Glu-88, and His-91 together coordinate chlorophyll a. Chlorophyll b is bound at residue Arg-93. Residues 94–114 form a helical membrane-spanning segment; that stretch reads WAMLAVPGIIVPEALGLGNWV. Leu-130 is a binding site for chlorophyll a. A helical membrane pass occupies residues 133 to 153; sequence PVPWGTLPTILAIEFLAIAFV. 3 residues coordinate chlorophyll b: Val-134, Glu-154, and Arg-157. Chlorophyll a-binding residues include Lys-191, Glu-192, Asn-195, Arg-197, Gln-209, and His-225.

It belongs to the light-harvesting chlorophyll a/b-binding (LHC) protein family. The LHC complex consists of chlorophyll a-b binding proteins. Binds at least 14 chlorophylls (8 Chl-a and 6 Chl-b) and carotenoids such as lutein and neoxanthin. is required as a cofactor. Post-translationally, photoregulated by reversible phosphorylation of its threonine residues.

It is found in the plastid. Its subcellular location is the chloroplast thylakoid membrane. In terms of biological role, the light-harvesting complex (LHC) functions as a light receptor, it captures and delivers excitation energy to photosystems with which it is closely associated. This chain is Chlorophyll a-b binding protein 6A, chloroplastic (CAB6A), found in Solanum lycopersicum (Tomato).